Reading from the N-terminus, the 245-residue chain is tRNA pseudouridine synthase A (245 aa).

The active-site Nucleophile is the Asp52. Tyr111 is a binding site for substrate.

Belongs to the tRNA pseudouridine synthase TruA family. As to quaternary structure, homodimer.

It catalyses the reaction uridine(38/39/40) in tRNA = pseudouridine(38/39/40) in tRNA. Formation of pseudouridine at positions 38, 39 and 40 in the anticodon stem and loop of transfer RNAs. The sequence is that of tRNA pseudouridine synthase A from Rhodopseudomonas palustris (strain BisB18).